Reading from the N-terminus, the 342-residue chain is Sorting nexin-15 (342 aa).

A PX domain is found at 1–130; it reads MSRQAKDDFL…EFFRGGEVTR (130 aa). Residues Arg51, Ser53, Arg87, and Arg96 each coordinate a 1,2-diacyl-sn-glycero-3-phospho-(1D-myo-inositol-3-phosphate). Omega-N-methylarginine is present on Arg105. 2 positions are modified to phosphoserine: Ser201 and Ser227. Positions 245–267 are disordered; it reads DQEPWEPGGQEEEEDGEGGPTPA. Residues 265–342 enclose the MIT domain; that stretch reads TPAYLSQATE…LRLHLSQLPP (78 aa).

This sequence belongs to the sorting nexin family. As to quaternary structure, homodimer. Interacts with SNX1, SNX2 and SNX4. In terms of tissue distribution, widely expressed.

Its subcellular location is the cytoplasm. The protein resides in the membrane. It is found in the cytoplasmic vesicle membrane. Functionally, may be involved in several stages of intracellular trafficking. Overexpression of SNX15 disrupts the normal trafficking of proteins from the plasma membrane to recycling endosomes or the TGN. The protein is Sorting nexin-15 (SNX15) of Homo sapiens (Human).